A 120-amino-acid chain; its full sequence is U13-lycotoxin-Ls1d (120 aa).

A signal peptide spans Met-1–Cys-16. Residues Phe-17–Arg-54 constitute a propeptide that is removed on maturation. 4 cysteine pairs are disulfide-bonded: Cys-56–Cys-70, Cys-63–Cys-76, Cys-69–Cys-87, and Cys-78–Cys-85. One can recognise an Agouti domain in the interval Cys-56 to Cys-95.

Belongs to the neurotoxin 05 (agouti) family. In terms of processing, contains 6 disulfide bonds. As to expression, expressed by the venom gland.

The protein localises to the secreted. This Lycosa singoriensis (Wolf spider) protein is U13-lycotoxin-Ls1d.